Consider the following 317-residue polypeptide: Olfactory receptor 2G2 (317 aa).

The Extracellular portion of the chain corresponds to 1–28 (MGMVRHTNESNLAGFILLGFSDYPQLQK). The N-linked (GlcNAc...) asparagine glycan is linked to asparagine 8. Residues 29-52 (VLFVLILILYLLTILGNTTIILVS) traverse the membrane as a helical segment. Residues 53 to 60 (RLEPKLHM) are Cytoplasmic-facing. A helical membrane pass occupies residues 61-82 (PMYFFLSHLSFLYRCFTSSVIP). The Extracellular segment spans residues 83–103 (QLLVNLWEPMKTIAYGGCLVH). Cysteine 100 and cysteine 192 are joined by a disulfide. A helical membrane pass occupies residues 104–123 (LYNSHALGSTECVLPAVMSC). The Cytoplasmic portion of the chain corresponds to 124–142 (DRYVAVCRPLHYTVLMHIH). Residues 143–161 (LCMALASMAWLSGIATTLV) traverse the membrane as a helical segment. Over 162–198 (QSTLTLQLPFCGHRQVDHFICEVPVLIKLACVGTTFN) the chain is Extracellular. A helical membrane pass occupies residues 199–222 (EAELFVASILFLIVPVSFILVSSG). The Cytoplasmic segment spans residues 223–239 (YIAHAVLRIKSATRRQK). A helical transmembrane segment spans residues 240-262 (AFGTCFSHLTVVTIFYGTIIFMY). Residues 263-275 (LQPAKSRSRDQGK) are Extracellular-facing. Residues 276–295 (FVSLFYTVVTRMLNPLIYTL) form a helical membrane-spanning segment. Topologically, residues 296–317 (RIKEVKGALKKVLAKALGVNIL) are cytoplasmic.

The protein belongs to the G-protein coupled receptor 1 family.

The protein localises to the cell membrane. Odorant receptor. The chain is Olfactory receptor 2G2 (OR2G2) from Homo sapiens (Human).